A 606-amino-acid polypeptide reads, in one-letter code: Threonine--tRNA ligase (606 aa).

The tract at residues 212-503 (DHRKLGVEMK…LLEHTAGELP (292 aa)) is catalytic. Residues C304, H355, and H480 each coordinate Zn(2+).

The protein belongs to the class-II aminoacyl-tRNA synthetase family. As to quaternary structure, homodimer. The cofactor is Zn(2+).

It localises to the cytoplasm. The enzyme catalyses tRNA(Thr) + L-threonine + ATP = L-threonyl-tRNA(Thr) + AMP + diphosphate + H(+). Catalyzes the attachment of threonine to tRNA(Thr) in a two-step reaction: L-threonine is first activated by ATP to form Thr-AMP and then transferred to the acceptor end of tRNA(Thr). Also edits incorrectly charged L-seryl-tRNA(Thr). The chain is Threonine--tRNA ligase from Campylobacter concisus (strain 13826).